A 506-amino-acid polypeptide reads, in one-letter code: Maturase K (506 aa).

This sequence belongs to the intron maturase 2 family. MatK subfamily.

The protein resides in the plastid. It localises to the chloroplast. Usually encoded in the trnK tRNA gene intron. Probably assists in splicing its own and other chloroplast group II introns. This chain is Maturase K, found in Empetrum nigrum (Black crowberry).